A 427-amino-acid chain; its full sequence is Adenylosuccinate synthetase (427 aa).

Residues 12-18 (GDEGKGK) and 40-42 (GHT) each bind GTP. The active-site Proton acceptor is the Asp13. 2 residues coordinate Mg(2+): Asp13 and Gly40. IMP is bound by residues 13 to 16 (DEGK), 38 to 41 (NAGH), Thr128, Arg142, Gln223, Thr238, and Arg302. His41 serves as the catalytic Proton donor. 298–304 (VTTGRDR) provides a ligand contact to substrate. GTP-binding positions include Arg304, 330-332 (KLD), and 412-414 (GVG).

This sequence belongs to the adenylosuccinate synthetase family. As to quaternary structure, homodimer. It depends on Mg(2+) as a cofactor.

It localises to the cytoplasm. The enzyme catalyses IMP + L-aspartate + GTP = N(6)-(1,2-dicarboxyethyl)-AMP + GDP + phosphate + 2 H(+). It participates in purine metabolism; AMP biosynthesis via de novo pathway; AMP from IMP: step 1/2. Its function is as follows. Plays an important role in the de novo pathway of purine nucleotide biosynthesis. Catalyzes the first committed step in the biosynthesis of AMP from IMP. This Streptomyces coelicolor (strain ATCC BAA-471 / A3(2) / M145) protein is Adenylosuccinate synthetase.